A 118-amino-acid polypeptide reads, in one-letter code: Aspartate 1-decarboxylase (118 aa).

Catalysis depends on serine 25, which acts as the Schiff-base intermediate with substrate; via pyruvic acid. At serine 25 the chain carries Pyruvic acid (Ser). Threonine 57 provides a ligand contact to substrate. The active-site Proton donor is tyrosine 58. Glycine 73 to alanine 75 provides a ligand contact to substrate.

The protein belongs to the PanD family. Heterooctamer of four alpha and four beta subunits. Pyruvate serves as cofactor. Post-translationally, is synthesized initially as an inactive proenzyme, which is activated by self-cleavage at a specific serine bond to produce a beta-subunit with a hydroxyl group at its C-terminus and an alpha-subunit with a pyruvoyl group at its N-terminus.

The protein localises to the cytoplasm. It catalyses the reaction L-aspartate + H(+) = beta-alanine + CO2. The protein operates within cofactor biosynthesis; (R)-pantothenate biosynthesis; beta-alanine from L-aspartate: step 1/1. Functionally, catalyzes the pyruvoyl-dependent decarboxylation of aspartate to produce beta-alanine. In Leptospira biflexa serovar Patoc (strain Patoc 1 / Ames), this protein is Aspartate 1-decarboxylase.